Here is a 110-residue protein sequence, read N- to C-terminus: V-type proton ATPase subunit F (110 aa).

This sequence belongs to the V-ATPase F subunit family. In terms of assembly, V-ATPase is a heteromultimeric enzyme made up of two complexes: the ATP-hydrolytic V1 complex and the proton translocation V0 complex. The V1 complex consists of three catalytic AB heterodimers that form a heterohexamer, three peripheral stalks each consisting of EG heterodimers, one central rotor including subunits D and F, and the regulatory subunits C and H. The proton translocation complex V0 consists of the proton transport subunit a, a ring of proteolipid subunits c9c'', rotary subunit d, subunits e and f, and two accessory subunits.

In terms of biological role, subunit of the V1 complex of vacuolar(H+)-ATPase (V-ATPase), a multisubunit enzyme composed of a peripheral complex (V1) that hydrolyzes ATP and a membrane integral complex (V0) that translocates protons. V-ATPase is responsible for acidifying and maintaining the pH of intracellular compartments and in some cell types, is targeted to the plasma membrane, where it is responsible for acidifying the extracellular environment. This is V-type proton ATPase subunit F (atp6s14) from Xenopus laevis (African clawed frog).